A 274-amino-acid chain; its full sequence is 3-deoxy-manno-octulosonate cytidylyltransferase (274 aa).

This sequence belongs to the KdsB family.

The protein localises to the cytoplasm. It carries out the reaction 3-deoxy-alpha-D-manno-oct-2-ulosonate + CTP = CMP-3-deoxy-beta-D-manno-octulosonate + diphosphate. Its pathway is nucleotide-sugar biosynthesis; CMP-3-deoxy-D-manno-octulosonate biosynthesis; CMP-3-deoxy-D-manno-octulosonate from 3-deoxy-D-manno-octulosonate and CTP: step 1/1. It participates in bacterial outer membrane biogenesis; lipopolysaccharide biosynthesis. In terms of biological role, activates KDO (a required 8-carbon sugar) for incorporation into bacterial lipopolysaccharide in Gram-negative bacteria. This is 3-deoxy-manno-octulosonate cytidylyltransferase from Bordetella avium (strain 197N).